The chain runs to 357 residues: Putative RING-H2 finger protein ATL37 (357 aa).

An N-terminal signal peptide occupies residues 1–31 (MTIFTRDFSHRILACVLLPLFLFQCLPYVTC). The helical transmembrane segment at 47-67 (SSIIGIVLLSLFLLLLVVYCL) threads the bilayer. The RING-type; atypical zinc finger occupies 120–162 (CAICLCEFEDEEPLRWMPPCSHTFHANCIDEWLSSRSTCPVCR). The segment at 172-210 (SFPHPSMDVETGNAQRGVQESPDERSLTGSSVTCNNNAN) is disordered. Polar residues predominate over residues 198–210 (LTGSSVTCNNNAN). Phosphoserine is present on Ser273. Disordered regions lie at residues 281–304 (RSSRQGYRSGSVGNERTGFSQGRQ) and 327–357 (LDRDNLMRETSQANDKDFGERSFQRLMPEKN). Over residues 283 to 304 (SRQGYRSGSVGNERTGFSQGRQ) the composition is skewed to polar residues. Positions 340 to 357 (NDKDFGERSFQRLMPEKN) are enriched in basic and acidic residues.

It belongs to the RING-type zinc finger family. ATL subfamily.

It is found in the membrane. It catalyses the reaction S-ubiquitinyl-[E2 ubiquitin-conjugating enzyme]-L-cysteine + [acceptor protein]-L-lysine = [E2 ubiquitin-conjugating enzyme]-L-cysteine + N(6)-ubiquitinyl-[acceptor protein]-L-lysine.. It participates in protein modification; protein ubiquitination. This Arabidopsis thaliana (Mouse-ear cress) protein is Putative RING-H2 finger protein ATL37 (ATL37).